The chain runs to 75 residues: MGALWSLCRRRVNSIGDVDGGIINLYNDYEEFNLETTKLIAAEEGRACGETNEGLEYDEDSENDELLFLPNKKPN.

A lipid anchor (N-myristoyl glycine; by host) is attached at Gly-2. The span at 53–65 (EGLEYDEDSENDE) shows a compositional bias: acidic residues. A disordered region spans residues 53–75 (EGLEYDEDSENDELLFLPNKKPN).

It belongs to the herpesviridae cytoplasmic envelopment protein 3 family. As to quaternary structure, interacts with BGLF2; this interaction is essential for the proper localization of each protein to the assembly complex and thus for the production of infectious virus. Post-translationally, myristoylation and palmitoylation (probably on one or more of the nearby cysteines at the N-terminus) enable membrane-binding and Golgi apparatus-specific targeting and are essential for efficient packaging. Phosphorylated. Phosphorylation does not seem to be required for recycling to the host Golgi apparatus. Packaging is selective for underphosphorylated forms.

Its subcellular location is the virion tegument. The protein localises to the virion membrane. It is found in the host cell membrane. It localises to the host Golgi apparatus membrane. Plays an important role in the cytoplasmic envelopment of tegument proteins and capsids during the assembly and egress processes. Also participates in viral entry at the fusion step probably by regulating the core fusion machinery. This is Cytoplasmic envelopment protein 3 from Homo sapiens (Human).